Consider the following 381-residue polypeptide: MIGNPVIQVPSSLMPSSSMIACPRVSPNGVPYLPPKPRTRHLVVRAASNSDAAHGQPSSDGGKNPLTVVLDVPRNIWRQTLKPLSDFGFGKRSIWEGGVGLFIVSGATLLALSWAWLRGFQMRSKFRKYQTVFELSHASGICTGTPVRIRGVTVGTIIRVNPSLKNIEAVAEIEDDKIIIPRNSLVEVNQSGLLMETMIDIMPRNPIPEPSVGPLHPECGKEGLIVCDRQTIKGVQGVSLDELVGIFTRIGREVEAIGVANTYSLAERAASVIEEARPLLKKIQAMAEDAQPLLSEFRDSGLLKEVECLTRSLTQASDDLRKVNSSIMTPENTELIQKSIYTLVYTLKNVESISSDILGFTGDEATRKNLKLLIKSLSRLL.

The transit peptide at Met-1–Arg-45 directs the protein to the chloroplast. Topologically, residues Ala-46–Glu-96 are stromal. The helical transmembrane segment at Gly-97–Leu-117 threads the bilayer. Over Arg-118 to Leu-381 the chain is Chloroplast intermembrane.

Homomultimer. Substrate-binding subunit of the TGD complex, a lipid translocator at the inner chloroplast envelope membrane made of TGD1, TGD2 and TGD3. Interacts with TGD1 and TGD3 with an overall subunit stoichiometry of 2 TGD1, 2 TGD3 and 8 to 12 TGD2. Interacts with TGD5.

The protein localises to the plastid. It is found in the chloroplast inner membrane. Its function is as follows. Component of a phosphatidic acid/lipid transport complex in the chloroplast envelope. Specifically binds phosphatidic acid (PA). Involved in lipid transfer from the endoplasmic reticulum (ER) to plastids, and necessary for thylakoids formation. The protein is Protein TRIGALACTOSYLDIACYLGLYCEROL 2, chloroplastic of Arabidopsis thaliana (Mouse-ear cress).